Reading from the N-terminus, the 404-residue chain is MFNNFLNMYMCTLAEKLCKFKKNNFNNIHRNNNFYRDNNFYRDNNFYRDNNFYRDNNFYRDNNLYTNNNLYRDNNFYRDNNFYRDNNFYRDNNLYTNNNLYRDNNLYTNNNLYRDNNFYNITLRKFHFIQTISNNNFNFEIIKKYGDVINKIMFIHTQKKNKQERFMFNNKKYIKRKEYILNDLNEFISIIPHPEINNEITNNSNQKKNKDNKQNVLSTNQQIITNYNLNHKENVTSNLNFNNKEEDEKKLDKLLKKRNIKKRDIVTITEEAKEELKKIISINKKENNNNYNNMNTICSDNHNDMNTICNDKNILKLFFITKGCNGLTHSFNFISKKDIHKEDEIIYDDQNNILLVIDKNCILYVINTTLDYYKDDLTEKFIFKNPNITSICPCGTSFHFSKKK.

Positions 244–289 (KEEDEKKLDKLLKKRNIKKRDIVTITEEAKEELKKIISINKKENNN) form a coiled coil.

This sequence belongs to the HesB/IscA family. As to quaternary structure, dimer. Homotetramer. Interacts with ABCB6.

It localises to the mitochondrion. It functions in the pathway cofactor biosynthesis; iron-sulfur cluster biosynthesis. Its function is as follows. Participates in iron-sulfur cluster formation (ISC) pathway for iron-sulfur (Fe-S) cluster biogenesis. Can bind and transfer [4Fe-4S] clusters to target apo-proteins. In Plasmodium falciparum (isolate 3D7), this protein is Iron-sulfur assembly protein IscA2.